The chain runs to 370 residues: Transcription factor E2F2 (370 aa).

The segment at 1–73 is disordered; the sequence is MYKRKTASIV…QSQSQPGQQR (73 aa). A compositionally biased stretch (low complexity) spans 15-26; sequence SAAGTTSSAMMM. Residues 31 to 49 are compositionally biased toward polar residues; the sequence is AETSVRSQSYESTPVSMDT. Low complexity predominate over residues 59-73; that stretch reads SPSNSQSQSQPGQQR. Residues 72 to 137 mediate DNA binding; sequence QRSVGSLVLL…GRHCSLVRWR (66 aa). Residues 137-226 are dimerization; that stretch reads RGGGFNNAKD…VDIKRNHYEL (90 aa).

This sequence belongs to the E2F/DP family. As to quaternary structure, forms a heterodimer with Dp. Interacts with Rbf/Rbf1 and Rbf2. Component of the DREAM complex, which is at least composed of Myb, Caf1-55, mip40, mip120, mip130, E2f2, Dp, Rbf, Rbf2, lin-52, HDAC1/Rpd3 and l(3)mbt. Ubiquitously expressed in eye disk.

It is found in the nucleus. Transcriptional repressor that binds to E2f sites and represses E2f-regulated target genes. Binding to E2f sites requires transcription factor Dp. Acts synergistically with Rbf2 to antagonize E2f1-mediated transcriptional activation. Component of the DREAM complex, a multiprotein complex that can both act as a transcription activator or repressor depending on the context. The DREAM complex is required for recruiting E2f2 at differentiation-specific promoters and for stabilizing E2f2-Rbf complexes during S phase. During development, the complex represses transcription of developmentally controlled E2f target genes. During oogenesis, plays a role in restricting DNA synthesis to sites of chorion gene amplification in late stage ovarian follicle cells. Plays an inhibitory role in ionizing radiation (IR)-induced p53-independent apoptosis. May be involved in cell cycle exit by temporarily limiting CycE-dependent activation of E2f-regulated transcription. The sequence is that of Transcription factor E2F2 (E2f2) from Drosophila melanogaster (Fruit fly).